A 134-amino-acid polypeptide reads, in one-letter code: MLRRSPTLLRVSPFSLYMKDLAKNGTLQNDRNPAKTASRLYRKLSEPEKMALQKRAARVSYPALDAYNRFQKEYAHRFLHLSNKKRQREVSKLWAELKKNGTVKVPKAPKAAKSASSKVKTAAKTAKKTTAARK.

Residues 1–10 (MLRRSPTLLR) constitute a propeptide that is removed on maturation. The span at 106-124 (PKAPKAAKSASSKVKTAAK) shows a compositional bias: low complexity. The segment at 106 to 134 (PKAPKAAKSASSKVKTAAKTAKKTTAARK) is disordered. Residues 125-134 (TAKKTTAARK) are compositionally biased toward basic residues.

This sequence belongs to the KAP family. In terms of assembly, associates with the kinetoplast DNA network.

The protein resides in the mitochondrion matrix. The protein localises to the kinetoplast. Functionally, histone H1-like DNA-binding protein involved in the organization and segregation of kinetoplast DNA (kDNA). The mitochondrial DNA of kinetoplastid protozoa consists of about 5,000 minicircles and 20 to 30 maxicircles. These circular DNAs are held together by catenation into a highly organized compact disk structure referred to as a kinetoplast DNA (kDNA) network. Binds preferentially to a specific fragment of minicircle DNA and is able to compact kDNA networks through DNA charge neutralization and condensation. In Crithidia fasciculata, this protein is kinetoplast-associated protein 3 (KAP3).